The chain runs to 95 residues: Pancreatic polypeptide prohormone (95 aa).

The N-terminal stretch at 1-29 is a signal peptide; the sequence is MAAARLCLSLLLLSTCVALLLQPLLGAQG. The residue at position 65 (tyrosine 65) is a Tyrosine amide. Residues 89–95 constitute a propeptide that is removed on maturation; the sequence is ELSPLDL.

Belongs to the NPY family.

It localises to the secreted. Hormone secreted by pancreatic cells that acts as a regulator of pancreatic and gastrointestinal functions probably by signaling through the G protein-coupled receptor NPY4R2. This Homo sapiens (Human) protein is Pancreatic polypeptide prohormone.